Reading from the N-terminus, the 458-residue chain is MDVNTLKSVYFIGAGGIGMSALVRYFLSKGKKVGGYDRTPSELTEKLIEEGAAIHYEESTELITDAFRDPATTLVVYTPAVPDTHKEFTYFRENGFEIHKRSQVLGMLTHAGKGLCVAGTHGKTTTSTMTAHLLHQSHVGCNAFLGGISKNYGTNLLLSDSSEYMVIEADEFDRSFHWLSPYISVITATDPDHLDIYGTKEAYLESFRKYTSLIQPGGALIVRKGIELQPALQNGVKLYTYSQEEGDFHAENIRIGNGEIFFDYVSPLGNIPNIQLGVPVSINIENGVAAMALAQMSGLTDEEIKRGMASFRGVDRRFDFKIKNDKVVFLSDYAHHPSEIKQSILSMRALYRDKKLTAVFQPHLYTRTRDFYKDFADSLSLLDEVILVDIYPAREQPIPGVTSKLIYDHLRPGIEKSMCKKEEILDVLSKKDIEVLITLGAGDIDNYVPQICGLLNKK.

119–125 (GTHGKTT) is an ATP binding site.

The protein belongs to the MurCDEF family.

The protein localises to the cytoplasm. It carries out the reaction UDP-N-acetyl-alpha-D-muramate + L-alanine + ATP = UDP-N-acetyl-alpha-D-muramoyl-L-alanine + ADP + phosphate + H(+). The protein operates within cell wall biogenesis; peptidoglycan biosynthesis. Its function is as follows. Cell wall formation. This is UDP-N-acetylmuramate--L-alanine ligase from Phocaeicola vulgatus (strain ATCC 8482 / DSM 1447 / JCM 5826 / CCUG 4940 / NBRC 14291 / NCTC 11154) (Bacteroides vulgatus).